The primary structure comprises 377 residues: Chaperone protein DnaJ (377 aa).

One can recognise a J domain in the interval 3 to 67 (DYYDLLGVGR…QTRARYDQFG (65 aa)). The CR-type zinc finger occupies 133–215 (GQEQEIKIPH…CGGQGVRQVR (83 aa)). Positions 146, 149, 163, 166, 189, 192, 203, and 206 each coordinate Zn(2+). CXXCXGXG motif repeat units lie at residues 146–153 (CDTCGGSG), 163–170 (CGTCGGAG), 189–196 (CPNCGGTG), and 203–210 (CNACGGQG).

Belongs to the DnaJ family. In terms of assembly, homodimer. It depends on Zn(2+) as a cofactor.

The protein resides in the cytoplasm. Its function is as follows. Participates actively in the response to hyperosmotic and heat shock by preventing the aggregation of stress-denatured proteins and by disaggregating proteins, also in an autonomous, DnaK-independent fashion. Unfolded proteins bind initially to DnaJ; upon interaction with the DnaJ-bound protein, DnaK hydrolyzes its bound ATP, resulting in the formation of a stable complex. GrpE releases ADP from DnaK; ATP binding to DnaK triggers the release of the substrate protein, thus completing the reaction cycle. Several rounds of ATP-dependent interactions between DnaJ, DnaK and GrpE are required for fully efficient folding. Also involved, together with DnaK and GrpE, in the DNA replication of plasmids through activation of initiation proteins. This chain is Chaperone protein DnaJ, found in Parasynechococcus marenigrum (strain WH8102).